Reading from the N-terminus, the 462-residue chain is Cytochrome P450 20A1 (462 aa).

A helical membrane pass occupies residues 4–24 (FAIFAVTFLLALVGAVLYLYP). Cysteine 409 is a heme binding site.

This sequence belongs to the cytochrome P450 family. Heme serves as cofactor.

It is found in the membrane. This chain is Cytochrome P450 20A1 (Cyp20a1), found in Rattus norvegicus (Rat).